The following is a 369-amino-acid chain: Coproporphyrin III ferrochelatase (369 aa).

Residues S61 and Y130 each contribute to the Fe-coproporphyrin III site. Fe(2+) contacts are provided by H197 and E286.

This sequence belongs to the ferrochelatase family.

It localises to the cytoplasm. The catalysed reaction is Fe-coproporphyrin III + 2 H(+) = coproporphyrin III + Fe(2+). Its pathway is porphyrin-containing compound metabolism; protoheme biosynthesis. Its function is as follows. Involved in coproporphyrin-dependent heme b biosynthesis. Catalyzes the insertion of ferrous iron into coproporphyrin III to form Fe-coproporphyrin III. The chain is Coproporphyrin III ferrochelatase from Corynebacterium diphtheriae (strain ATCC 700971 / NCTC 13129 / Biotype gravis).